The primary structure comprises 357 residues: Red-sensitive opsin-1 (357 aa).

At M1 to V49 the chain is on the extracellular side. A glycan (N-linked (GlcNAc...) asparagine) is linked at N31. The helical transmembrane segment at Y50–A74 threads the bilayer. Residues T75–N86 lie on the Cytoplasmic side of the membrane. The helical transmembrane segment at W87–F112 threads the bilayer. Over F113–E126 the chain is Extracellular. Residues C123 and C200 are joined by a disulfide bond. The helical transmembrane segment at G127–W146 threads the bilayer. The Cytoplasmic portion of the chain corresponds to E147–W165. Residues A166–S189 form a helical membrane-spanning segment. Topologically, residues R190–S215 are extracellular. Residues Y216–I243 form a helical membrane-spanning segment. At H244–R265 the chain is on the cytoplasmic side. A helical transmembrane segment spans residues M266–A289. The Extracellular portion of the chain corresponds to A290 to H297. The chain crosses the membrane as a helical span at residues P298–M322. K309 is subject to N6-(retinylidene)lysine. Residues N323–A357 are Cytoplasmic-facing.

Belongs to the G-protein coupled receptor 1 family. Opsin subfamily. Post-translationally, phosphorylated on some or all of the serine and threonine residues present in the C-terminal region. Retinal double cone principal photoreceptor cell outer segments.

Its subcellular location is the membrane. Its function is as follows. Visual pigments are the light-absorbing molecules that mediate vision. They consist of an apoprotein, opsin, covalently linked to cis-retinal. The chain is Red-sensitive opsin-1 (opn1lw1) from Danio rerio (Zebrafish).